The primary structure comprises 97 residues: uncharacterized protein (97 aa).

A signal peptide spans 1–21; sequence MLLHGLGRMNIIFICFPSLAC.

This is an uncharacterized protein from Schizosaccharomyces pombe (strain 972 / ATCC 24843) (Fission yeast).